We begin with the raw amino-acid sequence, 288 residues long: Formamidopyrimidine-DNA glycosylase (288 aa).

The active-site Schiff-base intermediate with DNA is P2. Catalysis depends on E3, which acts as the Proton donor. K58 functions as the Proton donor; for beta-elimination activity in the catalytic mechanism. Positions 101, 124, and 169 each coordinate DNA. An FPG-type zinc finger spans residues 254–288; the sequence is LVYDRAGLPCRVCGTPIRQIVQGQRSTFYCPACQR. R278 acts as the Proton donor; for delta-elimination activity in catalysis.

It belongs to the FPG family. As to quaternary structure, monomer. The cofactor is Zn(2+).

The catalysed reaction is Hydrolysis of DNA containing ring-opened 7-methylguanine residues, releasing 2,6-diamino-4-hydroxy-5-(N-methyl)formamidopyrimidine.. It carries out the reaction 2'-deoxyribonucleotide-(2'-deoxyribose 5'-phosphate)-2'-deoxyribonucleotide-DNA = a 3'-end 2'-deoxyribonucleotide-(2,3-dehydro-2,3-deoxyribose 5'-phosphate)-DNA + a 5'-end 5'-phospho-2'-deoxyribonucleoside-DNA + H(+). Involved in base excision repair of DNA damaged by oxidation or by mutagenic agents. Acts as a DNA glycosylase that recognizes and removes damaged bases. Has a preference for oxidized purines, such as 7,8-dihydro-8-oxoguanine (8-oxoG). Has AP (apurinic/apyrimidinic) lyase activity and introduces nicks in the DNA strand. Cleaves the DNA backbone by beta-delta elimination to generate a single-strand break at the site of the removed base with both 3'- and 5'-phosphates. The sequence is that of Formamidopyrimidine-DNA glycosylase from Ralstonia nicotianae (strain ATCC BAA-1114 / GMI1000) (Ralstonia solanacearum).